A 286-amino-acid chain; its full sequence is MINEKIWHEKLHRHVGQYFSIDKILYQKKNKYHDIIIFQNSIMGRIMAIDGVVQTTEKDEFIYHEMLTHVPIFYHGLIKNVLIVGGGDGGILREICRHKSIENITMVEIDLNIIDLCKQFFPKHNNNAYKDPRLKIVIDNGLNFVQKTKEKFDLIISDSTDPIGCGKDLFLSDFYFHCKNCLVKNGIFVGQNGVFFLQKNDINQSYKNLKKNFHDVSFYQATIPSYYGGTMMFSWGTDNIDFRQINIKNLEKRIKDKKLTFNYYNSNIHISSFYLPQYIINTLDKS.

The 234-residue stretch at 5–238 (KIWHEKLHRH…GTMMFSWGTD (234 aa)) folds into the PABS domain. Spermidine contacts are provided by His64 and Asp88. S-methyl-5'-thioadenosine-binding positions include Glu108 and 140-141 (NG). Asp158 functions as the Proton acceptor in the catalytic mechanism. 158 to 161 (DSTD) serves as a coordination point for spermidine.

This sequence belongs to the spermidine/spermine synthase family. In terms of assembly, homodimer or homotetramer.

Its subcellular location is the cytoplasm. It catalyses the reaction S-adenosyl 3-(methylsulfanyl)propylamine + putrescine = S-methyl-5'-thioadenosine + spermidine + H(+). Its pathway is amine and polyamine biosynthesis; spermidine biosynthesis; spermidine from putrescine: step 1/1. Functionally, catalyzes the irreversible transfer of a propylamine group from the amino donor S-adenosylmethioninamine (decarboxy-AdoMet) to putrescine (1,4-diaminobutane) to yield spermidine. This chain is Polyamine aminopropyltransferase, found in Buchnera aphidicola subsp. Schizaphis graminum (strain Sg).